The sequence spans 224 residues: Ribonuclease 3 (224 aa).

Residues 5–127 enclose the RNase III domain; the sequence is LERLCRRLNY…ILAAIYLDGG (123 aa). Glu-40 is a Mg(2+) binding site. Asp-44 is an active-site residue. Asp-113 and Glu-116 together coordinate Mg(2+). The active site involves Glu-116. Residues 154-224 enclose the DRBM domain; that stretch reads DAKTQLQEFL…AKAMLEQLQG (71 aa).

It belongs to the ribonuclease III family. In terms of assembly, homodimer. It depends on Mg(2+) as a cofactor.

It localises to the cytoplasm. The catalysed reaction is Endonucleolytic cleavage to 5'-phosphomonoester.. Functionally, digests double-stranded RNA. Involved in the processing of primary rRNA transcript to yield the immediate precursors to the large and small rRNAs (23S and 16S). Processes some mRNAs, and tRNAs when they are encoded in the rRNA operon. Processes pre-crRNA and tracrRNA of type II CRISPR loci if present in the organism. This is Ribonuclease 3 from Legionella pneumophila (strain Paris).